We begin with the raw amino-acid sequence, 415 residues long: Elongation factor Tu, chloroplastic (415 aa).

A tr-type G domain is found at 13–217; sequence KIHLNVGTIG…HLDLYLPTPR (205 aa). Residues 22–29 form a G1 region; the sequence is GHFSHGKT. A GTP-binding site is contributed by 22–29; the sequence is GHFSHGKT. Residue Thr29 coordinates Mg(2+). Positions 63 to 67 are G2; sequence NMSIY. The segment at 84-87 is G3; sequence DCPG. GTP is bound by residues 84–88 and 139–142; these read DCPGH and NKED. A G4 region spans residues 139 to 142; the sequence is NKED. A G5 region spans residues 177-179; sequence SAL.

This sequence belongs to the TRAFAC class translation factor GTPase superfamily. Classic translation factor GTPase family. EF-Tu/EF-1A subfamily.

The protein resides in the plastid. It localises to the chloroplast. The catalysed reaction is GTP + H2O = GDP + phosphate + H(+). GTP hydrolase that promotes the GTP-dependent binding of aminoacyl-tRNA to the A-site of ribosomes during protein biosynthesis. The chain is Elongation factor Tu, chloroplastic (tufA) from Coleochaete orbicularis (Charophycean green alga).